Reading from the N-terminus, the 632-residue chain is Extracellular metalloproteinase 2 (632 aa).

A signal peptide spans 1 to 19; it reads MHGLLLAGLAAALPLGVAG. Positions 20–244 are excised as a propeptide; the sequence is LPARQQSGLS…VHNVVDYVAS (225 aa). An N-linked (GlcNAc...) asparagine glycan is attached at asparagine 270. Zn(2+) is bound at residue histidine 429. Residue glutamate 430 is part of the active site. A Zn(2+)-binding site is contributed by histidine 433.

It belongs to the peptidase M36 family. Zn(2+) serves as cofactor.

It is found in the secreted. Functionally, secreted metalloproteinase that allows assimilation of proteinaceous substrates and probably acts as a virulence factor. This Arthroderma gypseum (strain ATCC MYA-4604 / CBS 118893) (Microsporum gypseum) protein is Extracellular metalloproteinase 2 (MEP2).